The sequence spans 214 residues: tRNA (guanine-N(7)-)-methyltransferase (214 aa).

Glu45, Glu70, Asp97, and Asp119 together coordinate S-adenosyl-L-methionine. Asp119 is a catalytic residue. Residues Lys123, Asp155, and 192-195 (TEYE) each bind substrate.

Belongs to the class I-like SAM-binding methyltransferase superfamily. TrmB family.

It carries out the reaction guanosine(46) in tRNA + S-adenosyl-L-methionine = N(7)-methylguanosine(46) in tRNA + S-adenosyl-L-homocysteine. It functions in the pathway tRNA modification; N(7)-methylguanine-tRNA biosynthesis. In terms of biological role, catalyzes the formation of N(7)-methylguanine at position 46 (m7G46) in tRNA. In Clostridioides difficile (strain 630) (Peptoclostridium difficile), this protein is tRNA (guanine-N(7)-)-methyltransferase.